A 274-amino-acid polypeptide reads, in one-letter code: MDLFMSIFTLGAITRQPAKIENASPASTVHATATIPLQASLPFGWLVVGVALLAVFQSASKVIALHKRWQLALHKGIQLVCNLLLLFVTIYSHLLLLAAGMEAQFLYIYALIYILQIVSFCRFIMRCWLCWKCRSKNPLLYDANYFVCWHTNCFDYCIPYNSITDTIVLTSGDGTTQPKLKEDYQIGGYSEDWHSGVKDYVVIHGYFTEVYYQLESTQLSTDTGAENATFFIYSKLVKDVDHVQIHTIDGSSGVVNPAMDPIYDEPTTTTSVPL.

Over 1 to 34 (MDLFMSIFTLGAITRQPAKIENASPASTVHATAT) the chain is Extracellular. A glycan (O-linked (GalNAc...) serine; by host) is linked at Ser-27. O-linked (GalNAc...) threonine; by host glycans are attached at residues Thr-28, Thr-32, and Thr-34. The region spanning 33-141 (ATIPLQASLP…KCRSKNPLLY (109 aa)) is the CoV 3a-like viroporin TM domain. A helical transmembrane segment spans residues 35–55 (IPLQASLPFGWLVVGVALLAV). Over 56 to 78 (FQSASKVIALHKRWQLALHKGIQ) the chain is Cytoplasmic. Residues 79–99 (LVCNLLLLFVTIYSHLLLLAA) traverse the membrane as a helical segment. Residues 100–104 (GMEAQ) lie on the Extracellular side of the membrane. A helical transmembrane segment spans residues 105-125 (FLYIYALIYILQIVSFCRFIM). Residues 126–274 (RCWLCWKCRS…EPTTTTSVPL (149 aa)) lie on the Cytoplasmic side of the membrane. The CoV 3a-like viroporin CD domain occupies 145–237 (YFVCWHTNCF…ATFFIYSKLV (93 aa)).

As to quaternary structure, homotetramer composed of two homodimers linked non covalently. Interacts with M, S and E proteins. Also interacts with the accessory protein 7a. Post-translationally, exists in both O-glycosylated and non-glycosylated forms. The glycosylated form is associated with the virion.

It localises to the virion. It is found in the host Golgi apparatus membrane. Its subcellular location is the host cell membrane. The protein localises to the secreted. The protein resides in the host cytoplasm. Forms homotetrameric potassium sensitive ion channels (viroporin) and may modulate virus release. Up-regulates expression of fibrinogen subunits FGA, FGB and FGG in host lung epithelial cells. Induces apoptosis in cell culture. Down-regulates the type 1 interferon receptor by inducing serine phosphorylation within the IFN alpha-receptor subunit 1 (IFNAR1) degradation motif and increasing IFNAR1 ubiquitination. The polypeptide is Protein 3 (Rhinolophus ferrumequinum (Greater horseshoe bat)).